Reading from the N-terminus, the 729-residue chain is 1,4-alpha-glucan branching enzyme GlgB (729 aa).

Asp409 serves as the catalytic Nucleophile. Glu462 serves as the catalytic Proton donor.

It belongs to the glycosyl hydrolase 13 family. GlgB subfamily. In terms of assembly, monomer.

The catalysed reaction is Transfers a segment of a (1-&gt;4)-alpha-D-glucan chain to a primary hydroxy group in a similar glucan chain.. It functions in the pathway glycan biosynthesis; glycogen biosynthesis. In terms of biological role, catalyzes the formation of the alpha-1,6-glucosidic linkages in glycogen by scission of a 1,4-alpha-linked oligosaccharide from growing alpha-1,4-glucan chains and the subsequent attachment of the oligosaccharide to the alpha-1,6 position. The sequence is that of 1,4-alpha-glucan branching enzyme GlgB from Saccharophagus degradans (strain 2-40 / ATCC 43961 / DSM 17024).